The chain runs to 180 residues: Shikimate kinase (180 aa).

14-19 (GAGKSC) contributes to the ATP binding site. Serine 18 provides a ligand contact to Mg(2+). Positions 36, 60, and 82 each coordinate substrate. Arginine 120 contacts ATP. Arginine 139 is a substrate binding site.

The protein belongs to the shikimate kinase family. Monomer. Requires Mg(2+) as cofactor.

The protein localises to the cytoplasm. The catalysed reaction is shikimate + ATP = 3-phosphoshikimate + ADP + H(+). Its pathway is metabolic intermediate biosynthesis; chorismate biosynthesis; chorismate from D-erythrose 4-phosphate and phosphoenolpyruvate: step 5/7. Functionally, catalyzes the specific phosphorylation of the 3-hydroxyl group of shikimic acid using ATP as a cosubstrate. The sequence is that of Shikimate kinase from Xanthomonas euvesicatoria pv. vesicatoria (strain 85-10) (Xanthomonas campestris pv. vesicatoria).